The primary structure comprises 301 residues: Growth-regulating factor 2 (301 aa).

Residues 11 to 46 (LFTATQWQELEHQALIYKYMAAGAPVPPDLLLHLRH) form the QLQ domain. 2 consecutive short sequence motifs (bipartite nuclear localization signal) follow at residues 83 to 102 (RRVE…KKWR) and 120 to 127 (RGKNRSRK). In terms of domain architecture, WRC spans 87–131 (DPEPGRCRRTDGKKWRCSREAYGESKYCEKHMHRGKNRSRKPVEM).

It belongs to the GRF family.

It localises to the nucleus. Its function is as follows. Transcription activator that plays a regulatory role in gibberellin-induced stem elongation. This Oryza sativa subsp. japonica (Rice) protein is Growth-regulating factor 2 (GRF2).